Here is a 462-residue protein sequence, read N- to C-terminus: tRNA modification GTPase MnmE (462 aa).

The (6S)-5-formyl-5,6,7,8-tetrahydrofolate site is built by Arg-23, Glu-88, and Arg-127. The 160-residue stretch at 224 to 383 (GLATVIIGRP…LEKAIADLFF (160 aa)) folds into the TrmE-type G domain. Asn-234 is a binding site for K(+). GTP-binding positions include 234–239 (NVGKSS), 253–259 (TDIPGTT), and 278–281 (DTAG). Ser-238 contacts Mg(2+). Residues Thr-253, Ile-255, and Thr-258 each contribute to the K(+) site. Thr-259 lines the Mg(2+) pocket. Residue Lys-462 participates in (6S)-5-formyl-5,6,7,8-tetrahydrofolate binding.

The protein belongs to the TRAFAC class TrmE-Era-EngA-EngB-Septin-like GTPase superfamily. TrmE GTPase family. In terms of assembly, homodimer. Heterotetramer of two MnmE and two MnmG subunits. Requires K(+) as cofactor.

The protein resides in the cytoplasm. Functionally, exhibits a very high intrinsic GTPase hydrolysis rate. Involved in the addition of a carboxymethylaminomethyl (cmnm) group at the wobble position (U34) of certain tRNAs, forming tRNA-cmnm(5)s(2)U34. This is tRNA modification GTPase MnmE from Geobacillus thermodenitrificans (strain NG80-2).